We begin with the raw amino-acid sequence, 141 residues long: Large ribosomal subunit protein uL11 (141 aa).

This sequence belongs to the universal ribosomal protein uL11 family. As to quaternary structure, part of the ribosomal stalk of the 50S ribosomal subunit. Interacts with L10 and the large rRNA to form the base of the stalk. L10 forms an elongated spine to which L12 dimers bind in a sequential fashion forming a multimeric L10(L12)X complex. One or more lysine residues are methylated.

Its function is as follows. Forms part of the ribosomal stalk which helps the ribosome interact with GTP-bound translation factors. The polypeptide is Large ribosomal subunit protein uL11 (Streptococcus agalactiae serotype III (strain NEM316)).